A 703-amino-acid chain; its full sequence is Probable ATP-dependent RNA helicase vasa-like (703 aa).

Disordered stretches follow at residues 1 to 22 (MSDD…ESFG), 35 to 73 (NTGN…GRGG), and 88 to 167 (RDCP…RGCF). Positions 61–73 (SGGGGFGGRGRGG) are enriched in gly residues. The CCHC-type 1 zinc finger occupies 77–92 (CFKCGDEGHMARDCPS). Residues 146–155 (FGFGSGSGSR) are compositionally biased toward gly residues. 2 consecutive CCHC-type zinc fingers follow at residues 166–181 (CFKC…DCPS) and 189–204 (CFKC…DCPN). The Q motif signature appears at 261-289 (ESFQSMNLRPLLLENIVKAGYGCPTPVQK). One can recognise a Helicase ATP-binding domain in the interval 292–475 (IPNVMNGRDI…SAFLNNYLFV (184 aa)). Position 305 to 312 (305 to 312 (AQTGSGKT)) interacts with ATP. The DEAD box signature appears at 419–422 (DEAD). The Helicase C-terminal domain maps to 506–651 (MCEEILISAD…TIPDWLTQKA (146 aa)). Residues 676–703 (GGGRGWEKNQASSFLGGPSESNVDEEWD) are disordered.

It belongs to the DEAD box helicase family. DDX4/VASA subfamily. As to expression, expressed in ovaries and testis. Not expressed in somatic tissue of the ovaries including follicle cells, muscle and connective tissue.

It localises to the cytoplasm. It is found in the nucleus. The protein localises to the nucleolus. The catalysed reaction is ATP + H2O = ADP + phosphate + H(+). In terms of biological role, involved in translational control mechanisms operating in early stages of oogenesis. Required maternally in many stages of oogenesis, including cystocyte differentiation, oocyte differentiation, and specification of anterior-posterior polarity in the developing cysts. Essential for the formation and/or structural integrity of perinuclear nuage particles during germ cell formation. The protein is Probable ATP-dependent RNA helicase vasa-like of Penaeus vannamei (Whiteleg shrimp).